We begin with the raw amino-acid sequence, 176 residues long: Small ribosomal subunit protein uS5 (176 aa).

The 64-residue stretch at 14–77 (MQEKLIHINR…DQARRWMTSI (64 aa)) folds into the S5 DRBM domain.

The protein belongs to the universal ribosomal protein uS5 family. Part of the 30S ribosomal subunit. Contacts proteins S4 and S8.

Its function is as follows. With S4 and S12 plays an important role in translational accuracy. Located at the back of the 30S subunit body where it stabilizes the conformation of the head with respect to the body. This chain is Small ribosomal subunit protein uS5, found in Acidithiobacillus ferrooxidans (strain ATCC 23270 / DSM 14882 / CIP 104768 / NCIMB 8455) (Ferrobacillus ferrooxidans (strain ATCC 23270)).